The chain runs to 95 residues: MAIEHADVLRAAHLARVGLGEDEATGYVDDLSRILEMVDQLQAVDTQGIAPLAHPLDATQRLRPDEVTEHNQRERFQACAPVTEGGLYLVPRVVE.

This sequence belongs to the GatC family. As to quaternary structure, heterotrimer of A, B and C subunits.

It carries out the reaction L-glutamyl-tRNA(Gln) + L-glutamine + ATP + H2O = L-glutaminyl-tRNA(Gln) + L-glutamate + ADP + phosphate + H(+). The catalysed reaction is L-aspartyl-tRNA(Asn) + L-glutamine + ATP + H2O = L-asparaginyl-tRNA(Asn) + L-glutamate + ADP + phosphate + 2 H(+). Allows the formation of correctly charged Asn-tRNA(Asn) or Gln-tRNA(Gln) through the transamidation of misacylated Asp-tRNA(Asn) or Glu-tRNA(Gln) in organisms which lack either or both of asparaginyl-tRNA or glutaminyl-tRNA synthetases. The reaction takes place in the presence of glutamine and ATP through an activated phospho-Asp-tRNA(Asn) or phospho-Glu-tRNA(Gln). This Chromohalobacter salexigens (strain ATCC BAA-138 / DSM 3043 / CIP 106854 / NCIMB 13768 / 1H11) protein is Aspartyl/glutamyl-tRNA(Asn/Gln) amidotransferase subunit C.